The following is a 657-amino-acid chain: Glycogen debranching enzyme (657 aa).

The Nucleophile role is filled by Asp-336. Glu-371 (proton donor) is an active-site residue. The interval 460 to 479 (ANGEENRDGTNNNYSNNHGK) is disordered.

Belongs to the glycosyl hydrolase 13 family.

It carries out the reaction Hydrolysis of (1-&gt;6)-alpha-D-glucosidic linkages to branches with degrees of polymerization of three or four glucose residues in limit dextrin.. It participates in glycan degradation; glycogen degradation. Removes maltotriose and maltotetraose chains that are attached by 1,6-alpha-linkage to the limit dextrin main chain, generating a debranched limit dextrin. This chain is Glycogen debranching enzyme, found in Escherichia coli O127:H6 (strain E2348/69 / EPEC).